A 371-amino-acid chain; its full sequence is Anhydro-N-acetylmuramic acid kinase (371 aa).

12-20 (GTVLDGNID) provides a ligand contact to ATP.

It belongs to the anhydro-N-acetylmuramic acid kinase family.

It carries out the reaction 1,6-anhydro-N-acetyl-beta-muramate + ATP + H2O = N-acetyl-D-muramate 6-phosphate + ADP + H(+). Its pathway is amino-sugar metabolism; 1,6-anhydro-N-acetylmuramate degradation. It participates in cell wall biogenesis; peptidoglycan recycling. In terms of biological role, catalyzes the specific phosphorylation of 1,6-anhydro-N-acetylmuramic acid (anhMurNAc) with the simultaneous cleavage of the 1,6-anhydro ring, generating MurNAc-6-P. Is required for the utilization of anhMurNAc either imported from the medium or derived from its own cell wall murein, and thus plays a role in cell wall recycling. The sequence is that of Anhydro-N-acetylmuramic acid kinase from Rhizobium rhizogenes (strain K84 / ATCC BAA-868) (Agrobacterium radiobacter).